A 616-amino-acid polypeptide reads, in one-letter code: Ectonucleoside triphosphate diphosphohydrolase 4 (616 aa).

Topologically, residues 1–33 (MGRIGISCLFPASWHFSISPVGCPRILNTNLRQ) are cytoplasmic. The helical transmembrane segment at 34-54 (IMVISVLAAAVSLLYFSVVII) threads the bilayer. Topologically, residues 55 to 559 (RNKYGRLTRD…ASHTHWRGVS (505 aa)) are lumenal. Catalysis depends on Glu-222, which acts as the Proton acceptor. Cys-368 and Cys-395 are joined by a disulfide. Residues Asn-404 and Asn-407 are each glycosylated (N-linked (GlcNAc...) asparagine). An intrachain disulfide couples Cys-461 to Cys-490. A helical transmembrane segment spans residues 560 to 580 (FVYNHYLFSGCFLVVLLAILL). Topologically, residues 581–616 (YLLRLRRIHRRTPRSSSAAALWMEEGLPAQNAPGTL) are cytoplasmic.

Belongs to the GDA1/CD39 NTPase family. Requires Ca(2+) as cofactor. The cofactor is Mg(2+). Ubiquitous. Highest expression in testis and lowest in bladder.

The protein resides in the cytoplasmic vesicle. The protein localises to the autophagosome membrane. It is found in the lysosome membrane. Its subcellular location is the golgi apparatus membrane. The enzyme catalyses a ribonucleoside 5'-diphosphate + H2O = a ribonucleoside 5'-phosphate + phosphate + H(+). The catalysed reaction is a ribonucleoside 5'-triphosphate + H2O = a ribonucleoside 5'-diphosphate + phosphate + H(+). It catalyses the reaction UDP + H2O = UMP + phosphate + H(+). It carries out the reaction UTP + H2O = UDP + phosphate + H(+). The enzyme catalyses CTP + H2O = CDP + phosphate + H(+). The catalysed reaction is GDP + H2O = GMP + phosphate + H(+). It catalyses the reaction GTP + H2O = GDP + phosphate + H(+). It carries out the reaction 5-methyl-UTP + H2O = 5-methyl-UDP + phosphate + H(+). Catalyzes the hydrolysis of nucleoside triphosphates and diphosphates in a calcium- or magnesium-dependent manner, with a preference for pyrimidines. Preferentially hydrolyzes UTP and TTP. AMP, ADP, ATP and UMP are not substrates. Preferentially activated by Ca(2+) over Mg(2+). In terms of biological role, has a broad substrate specificity with the ability of cleaving all nucleotide di- and triphosphates with the exception of adenosine di- and triphosphate (ADP and ATP). Preferentially hydrolyzes CTP, UDP, CDP, GTP and GDP. Can use either Ca(2+) or Mg(2+) equally. The polypeptide is Ectonucleoside triphosphate diphosphohydrolase 4 (Homo sapiens (Human)).